The primary structure comprises 161 residues: Cyclic pyranopterin monophosphate synthase (161 aa).

Residues 75 to 77 (LCH) and 113 to 114 (ME) each bind substrate. The active site involves aspartate 128.

The protein belongs to the MoaC family. In terms of assembly, homohexamer; trimer of dimers.

The catalysed reaction is (8S)-3',8-cyclo-7,8-dihydroguanosine 5'-triphosphate = cyclic pyranopterin phosphate + diphosphate. Its pathway is cofactor biosynthesis; molybdopterin biosynthesis. In terms of biological role, catalyzes the conversion of (8S)-3',8-cyclo-7,8-dihydroguanosine 5'-triphosphate to cyclic pyranopterin monophosphate (cPMP). The sequence is that of Cyclic pyranopterin monophosphate synthase from Thioalkalivibrio sulfidiphilus (strain HL-EbGR7).